Here is a 1060-residue protein sequence, read N- to C-terminus: Beta-galactosidase (1060 aa).

Positions 110 and 209 each coordinate substrate. Asp209 lines the Na(+) pocket. Mg(2+)-binding residues include Glu432, His434, and Glu477. Substrate-binding positions include Glu477 and 553 to 556 (EYAH). The active-site Proton donor is the Glu477. Catalysis depends on Glu553, which acts as the Nucleophile. Residue Asn613 participates in Mg(2+) binding. Positions 617 and 620 each coordinate Na(+). Residues Asn620 and Trp1035 each coordinate substrate.

Belongs to the glycosyl hydrolase 2 family. In terms of assembly, homotetramer. Mg(2+) serves as cofactor. Requires Na(+) as cofactor.

It carries out the reaction Hydrolysis of terminal non-reducing beta-D-galactose residues in beta-D-galactosides.. This chain is Beta-galactosidase, found in Yersinia pestis bv. Antiqua (strain Antiqua).